A 378-amino-acid polypeptide reads, in one-letter code: D-alanine--D-alanine ligase (378 aa).

Residues 157 to 368 (KVVFESAGLS…YGDLIDELIH (212 aa)) enclose the ATP-grasp domain. 189 to 244 (VDKLGFPVFVKPARAGSSMGISKVDSMEGLDAAIDEARRHDLKLVIEAGIVGREIE) is a binding site for ATP. Mg(2+) is bound by residues Asp-322, Glu-335, and Asn-337.

It belongs to the D-alanine--D-alanine ligase family. Requires Mg(2+) as cofactor. It depends on Mn(2+) as a cofactor.

The protein resides in the cytoplasm. It carries out the reaction 2 D-alanine + ATP = D-alanyl-D-alanine + ADP + phosphate + H(+). It functions in the pathway cell wall biogenesis; peptidoglycan biosynthesis. In terms of biological role, cell wall formation. This is D-alanine--D-alanine ligase from Paenarthrobacter aurescens (strain TC1).